A 507-amino-acid chain; its full sequence is Maturase K (507 aa).

Belongs to the intron maturase 2 family. MatK subfamily.

The protein localises to the plastid. It localises to the chloroplast. Its function is as follows. Usually encoded in the trnK tRNA gene intron. Probably assists in splicing its own and other chloroplast group II introns. This Calocedrus decurrens (California incense-cedar) protein is Maturase K.